Here is a 782-residue protein sequence, read N- to C-terminus: Cyclic nucleotide-gated channel beta-3 (782 aa).

2 disordered regions span residues 1–111 (MFKS…PKSK) and 147–168 (GDISSPEASPQTAKPTAVPSTQ). At 1–213 (MFKSLTIKSN…SIDSYTDRLY (213 aa)) the chain is on the cytoplasmic side. Basic and acidic residues-rich tracts occupy residues 13–25 (KPREENDENKQDP) and 57–73 (EESHAKMQDKISEKNSL). Composition is skewed to polar residues over residues 74 to 83 (RDLTTNPNHQ) and 152 to 168 (PEASPQTAKPTAVPSTQ). A helical transmembrane segment spans residues 214-237 (LLWLLLVTIAYNWNCWLIPLRLVF). Topologically, residues 238–244 (PYQTPDN) are extracellular. Residues 245–265 (THYWFITDITCDIIYLCDMLL) traverse the membrane as a helical segment. The Cytoplasmic portion of the chain corresponds to 266–294 (IQPRLQFIKGGDIMVDSNELKRHYRSSTK). The chain crosses the membrane as a helical span at residues 295–312 (FQLDVASVMPFDVFYLFF). The Extracellular portion of the chain corresponds to 313–315 (GFN). A helical membrane pass occupies residues 316 to 330 (PVFRMNRILKYTSFF). The Cytoplasmic portion of the chain corresponds to 331 to 343 (EFNHHLESIMDKA). An ion conduction pathway region spans residues 343–442 (AYIYRVIRTT…IGQMQDVIGA (100 aa)). Residues 344 to 366 (YIYRVIRTTGYLLYTLHINACIY) traverse the membrane as a helical segment. The Extracellular portion of the chain corresponds to 367–388 (YWASDYEGIGSTKWVYNGEGNK). 2 helical membrane passes run 389-415 (YLRCYYWAVRTLITIGGLPEPQTSFEI) and 416-440 (VFQLLNFFSGVFVFSSLIGQMQDVI). The segment at 402–405 (TIGG) is selectivity filter. The Cytoplasmic segment spans residues 441-782 (GAATANQNNF…TIEVKEKAKQ (342 aa)). Residues 445–521 (ANQNNFRISM…SIISKVELFK (77 aa)) form a C-linker region. The interval 525–641 (TQMIYDMLLR…LLMKKASVLL (117 aa)) is cyclic nucleotide-binding domain. Residues glycine 586, glutamate 587, arginine 599, and threonine 600 each coordinate 3',5'-cyclic GMP. The interval 692–724 (EQTIQKTSENSEEGGGKRREYEDKEREPSEKIL) is disordered. Positions 705-724 (GGGKRREYEDKEREPSEKIL) are enriched in basic and acidic residues.

Belongs to the cyclic nucleotide-gated cation channel (TC 1.A.1.5) family. CNGB3 subfamily. In terms of assembly, forms heterotetrameric channels composed of CNGA3 and CNGB3 subunits with 3:1 stoichiometry.

It is found in the cell membrane. The catalysed reaction is Ca(2+)(in) = Ca(2+)(out). It carries out the reaction Na(+)(in) = Na(+)(out). The enzyme catalyses K(+)(in) = K(+)(out). It catalyses the reaction NH4(+)(in) = NH4(+)(out). The catalysed reaction is Rb(+)(in) = Rb(+)(out). It carries out the reaction Li(+)(in) = Li(+)(out). The enzyme catalyses Cs(+)(in) = Cs(+)(out). Functionally, pore-forming subunit of the cone cyclic nucleotide-gated channel. Mediates cone photoresponses at bright light converting transient changes in intracellular cGMP levels into electrical signals. In the dark, cGMP levels are high and keep the channel open enabling a steady inward current carried by Na(+) and Ca(2+) ions that leads to membrane depolarization and neurotransmitter release from synaptic terminals. Upon photon absorption cGMP levels decline leading to channel closure and membrane hyperpolarization that ultimately slows neurotransmitter release and signals the presence of light, the end point of the phototransduction cascade. Conducts cGMP- and cAMP-gated ion currents, with permeability for monovalent and divalent cations. This chain is Cyclic nucleotide-gated channel beta-3, found in Canis lupus familiaris (Dog).